A 501-amino-acid polypeptide reads, in one-letter code: Rhazimal synthase (501 aa).

The helical transmembrane segment at 4–24 (MQLSFASAVVYSLIFFVFLLV) threads the bilayer. An N-linked (GlcNAc...) asparagine glycan is attached at Asn-282. Cys-442 contributes to the heme binding site.

Belongs to the cytochrome P450 family. Heme serves as cofactor.

The protein localises to the membrane. It carries out the reaction (19E)-geissoschizine + reduced [NADPH--hemoprotein reductase] + O2 = rhazimal + oxidized [NADPH--hemoprotein reductase] + 2 H2O + H(+). The catalysed reaction is (19E)-geissoschizine + reduced [NADPH--hemoprotein reductase] + O2 = akuammicine + formate + oxidized [NADPH--hemoprotein reductase] + H2O + H(+). Its pathway is alkaloid biosynthesis. In terms of biological role, a cytochrome P450 monooxygenase involved in the biosynthesis of akuammilan monoterpene indole alkaloids (MIAs) natural products, components with various biological properties such as antidiabetic, antibacterial, anti-inflammatory, anticancer, and antimalarial activities. Catalyzes the conversion of geissoschizine to rhazimal. Can also, with lower efficiency, support the conversion of geissoschizine to akuammicine. This is Rhazimal synthase from Alstonia scholaris (Dogbane).